Here is a 68-residue protein sequence, read N- to C-terminus: uncharacterized protein (68 aa).

This is an uncharacterized protein from Orgyia pseudotsugata (Douglas-fir tussock moth).